We begin with the raw amino-acid sequence, 447 residues long: Argininosuccinate lyase (447 aa).

Belongs to the lyase 1 family. Argininosuccinate lyase subfamily.

The protein localises to the cytoplasm. It carries out the reaction 2-(N(omega)-L-arginino)succinate = fumarate + L-arginine. Its pathway is amino-acid biosynthesis; L-arginine biosynthesis; L-arginine from L-ornithine and carbamoyl phosphate: step 3/3. The protein is Argininosuccinate lyase of Sulfolobus acidocaldarius (strain ATCC 33909 / DSM 639 / JCM 8929 / NBRC 15157 / NCIMB 11770).